The following is a 211-amino-acid chain: Proteasome subunit beta (211 aa).

A propeptide spans 1-9 (removed in mature form; by autocatalysis); the sequence is MSEAETLKG. The active-site Nucleophile is Thr-10.

This sequence belongs to the peptidase T1B family. As to quaternary structure, the 20S proteasome core is composed of 14 alpha and 14 beta subunits that assemble into four stacked heptameric rings, resulting in a barrel-shaped structure. The two inner rings, each composed of seven catalytic beta subunits, are sandwiched by two outer rings, each composed of seven alpha subunits. The catalytic chamber with the active sites is on the inside of the barrel. Has a gated structure, the ends of the cylinder being occluded by the N-termini of the alpha-subunits. Is capped at one or both ends by the proteasome regulatory ATPase, PAN.

It is found in the cytoplasm. It carries out the reaction Cleavage of peptide bonds with very broad specificity.. The formation of the proteasomal ATPase PAN-20S proteasome complex, via the docking of the C-termini of PAN into the intersubunit pockets in the alpha-rings, triggers opening of the gate for substrate entry. Interconversion between the open-gate and close-gate conformations leads to a dynamic regulation of the 20S proteasome proteolysis activity. Its function is as follows. Component of the proteasome core, a large protease complex with broad specificity involved in protein degradation. In Methanosphaerula palustris (strain ATCC BAA-1556 / DSM 19958 / E1-9c), this protein is Proteasome subunit beta.